The primary structure comprises 105 residues: Chloroacetanilide N-alkylformylase 2, ferredoxin component (105 aa).

The 104-residue stretch at 2 to 105 folds into the 2Fe-2S ferredoxin-type domain; sequence PKLVVVTREG…GLTVTIAPED (104 aa). Positions 40, 46, 49, and 86 each coordinate [2Fe-2S] cluster.

Belongs to the adrenodoxin/putidaredoxin family. As to quaternary structure, the chloroacetanilide N-alkylformylase multicomponent enzyme system is composed of an oxygenase component (CndA) and an electron transfer component formed by a ferredoxin reductase (CndC1) and a ferredoxin (CndB1). In vitro, chloroacetanilide N-alkylformylase assays in which CndB1 is substituted for CndB2 demonstrate that the two enzymes possess nearly identical activities. [2Fe-2S] cluster serves as cofactor.

Component of the chloroacetanilide N-alkylformylase multicomponent enzyme system involved in the degradation of chloroacetanilide herbicides (N-alkoxyalkyl-N-chloroacetyl-substituted aniline derivatives). In vitro, functions as an intermediate electron transfer protein. This Rhizorhabdus wittichii (strain DC-6 / KACC 16600) (Sphingomonas wittichii) protein is Chloroacetanilide N-alkylformylase 2, ferredoxin component.